The primary structure comprises 187 residues: Ribulose bisphosphate carboxylase small subunit, chloroplastic (187 aa).

Residues 1–56 (MASSVMSTATVATGANAAQASMIASFNGLKSAASFPVTRKQDLDITSIASNGGRVE) constitute a chloroplast transit peptide.

The protein belongs to the RuBisCO small chain family. Heterohexadecamer of 8 large and 8 small subunits.

It is found in the plastid. The protein resides in the chloroplast. Its function is as follows. RuBisCO catalyzes two reactions: the carboxylation of D-ribulose 1,5-bisphosphate, the primary event in carbon dioxide fixation, as well as the oxidative fragmentation of the pentose substrate. Both reactions occur simultaneously and in competition at the same active site. Although the small subunit is not catalytic it is essential for maximal activity. This is Ribulose bisphosphate carboxylase small subunit, chloroplastic from Capsicum annuum (Capsicum pepper).